Reading from the N-terminus, the 349-residue chain is Phosphoribosylformylglycinamidine cyclo-ligase (349 aa).

Belongs to the AIR synthase family.

The protein localises to the cytoplasm. It carries out the reaction 2-formamido-N(1)-(5-O-phospho-beta-D-ribosyl)acetamidine + ATP = 5-amino-1-(5-phospho-beta-D-ribosyl)imidazole + ADP + phosphate + H(+). Its pathway is purine metabolism; IMP biosynthesis via de novo pathway; 5-amino-1-(5-phospho-D-ribosyl)imidazole from N(2)-formyl-N(1)-(5-phospho-D-ribosyl)glycinamide: step 2/2. The polypeptide is Phosphoribosylformylglycinamidine cyclo-ligase (Methanococcus vannielii (strain ATCC 35089 / DSM 1224 / JCM 13029 / OCM 148 / SB)).